The chain runs to 157 residues: Neutrophil recruitment protein (157 aa).

Residues 1-19 (MCSIWLTFFLSFLILNTKA) form the signal peptide.

This sequence belongs to the PBP/GOBP family. In terms of assembly, interacts with mouse TLR1; the interaction promotes activation of canonical NF-kappa-B signaling in host macrophages. Interacts with human TLR1. Interacts with mouse TLR4; the interaction promotes activation of canonical NF-kappa-B signaling in host macrophages. Interacts with human TLR4. In terms of tissue distribution, female salivary gland (at protein level).

Its subcellular location is the secreted. Functionally, activates MyD88-dependent canonical NF-kappa-B signaling in host macrophages via interaction with host TLR1 and TLR4; this drives the expression of neutrophil chemoattractants, followed by the subsequent influx of neutrophils and recruitment of myeloid cells at the bite site. Its function is as follows. (Microbial infection) Promotes Zika virus infection in mouse model by facilitating recruitment of flavivirus-permissive myeloid cells at the bite site. (Microbial infection) Promotes dengue virus infection in mouse model by facilitating recruitment of flavivirus-permissive myeloid cells at the bite site. This is Neutrophil recruitment protein from Aedes aegypti (Yellowfever mosquito).